A 273-amino-acid polypeptide reads, in one-letter code: Dermonecrotic toxin LhSicTox-alphaIA2aii (273 aa).

Residue His5 is part of the active site. Residues Glu25 and Asp27 each contribute to the Mg(2+) site. His41 (nucleophile) is an active-site residue. Disulfide bonds link Cys45-Cys51 and Cys47-Cys190. Asp85 lines the Mg(2+) pocket.

The protein belongs to the arthropod phospholipase D family. Class II subfamily. Mg(2+) is required as a cofactor. Expressed by the venom gland.

It is found in the secreted. It catalyses the reaction an N-(acyl)-sphingosylphosphocholine = an N-(acyl)-sphingosyl-1,3-cyclic phosphate + choline. The catalysed reaction is an N-(acyl)-sphingosylphosphoethanolamine = an N-(acyl)-sphingosyl-1,3-cyclic phosphate + ethanolamine. It carries out the reaction a 1-acyl-sn-glycero-3-phosphocholine = a 1-acyl-sn-glycero-2,3-cyclic phosphate + choline. The enzyme catalyses a 1-acyl-sn-glycero-3-phosphoethanolamine = a 1-acyl-sn-glycero-2,3-cyclic phosphate + ethanolamine. Functionally, dermonecrotic toxins cleave the phosphodiester linkage between the phosphate and headgroup of certain phospholipids (sphingolipid and lysolipid substrates), forming an alcohol (often choline) and a cyclic phosphate. This toxin acts on sphingomyelin (SM). It may also act on ceramide phosphoethanolamine (CPE), lysophosphatidylcholine (LPC) and lysophosphatidylethanolamine (LPE), but not on lysophosphatidylserine (LPS), and lysophosphatidylglycerol (LPG). It acts by transphosphatidylation, releasing exclusively cyclic phosphate products as second products. Induces dermonecrosis, hemolysis, increased vascular permeability, edema, inflammatory response, and platelet aggregation. In Loxosceles hirsuta (Recluse spider), this protein is Dermonecrotic toxin LhSicTox-alphaIA2aii.